A 117-amino-acid chain; its full sequence is Immunoglobulin kappa variable 1-27 (117 aa).

Residues 1 to 22 form the signal peptide; the sequence is MDMRVPAQLLGLLLLWLPDTRC. Positions 23-45 are framework-1; sequence DIQMTQSPSSLSASVGDRVTITC. Positions 23–117 constitute an Ig-like domain; that stretch reads DIQMTQSPSS…YYCQKYNSAP (95 aa). The cysteines at positions 45 and 110 are disulfide-linked. Positions 46-56 are complementarity-determining-1; that stretch reads RASQGISNYLA. A framework-2 region spans residues 57-71; the sequence is WYQQKPGKVPKLLIY. Residues 72–78 form a complementarity-determining-2 region; sequence AASTLQS. The segment at 79–110 is framework-3; that stretch reads GVPSRFSGSGSGTDFTLTISSLQPEDVATYYC. Residues 111–117 form a complementarity-determining-3 region; it reads QKYNSAP.

As to quaternary structure, immunoglobulins are composed of two identical heavy chains and two identical light chains; disulfide-linked.

It localises to the secreted. The protein resides in the cell membrane. Its function is as follows. V region of the variable domain of immunoglobulin light chains that participates in the antigen recognition. Immunoglobulins, also known as antibodies, are membrane-bound or secreted glycoproteins produced by B lymphocytes. In the recognition phase of humoral immunity, the membrane-bound immunoglobulins serve as receptors which, upon binding of a specific antigen, trigger the clonal expansion and differentiation of B lymphocytes into immunoglobulins-secreting plasma cells. Secreted immunoglobulins mediate the effector phase of humoral immunity, which results in the elimination of bound antigens. The antigen binding site is formed by the variable domain of one heavy chain, together with that of its associated light chain. Thus, each immunoglobulin has two antigen binding sites with remarkable affinity for a particular antigen. The variable domains are assembled by a process called V-(D)-J rearrangement and can then be subjected to somatic hypermutations which, after exposure to antigen and selection, allow affinity maturation for a particular antigen. In Homo sapiens (Human), this protein is Immunoglobulin kappa variable 1-27.